Reading from the N-terminus, the 64-residue chain is Large ribosomal subunit protein uL30 (64 aa).

The protein belongs to the universal ribosomal protein uL30 family. As to quaternary structure, part of the 50S ribosomal subunit.

The sequence is that of Large ribosomal subunit protein uL30 from Bradyrhizobium diazoefficiens (strain JCM 10833 / BCRC 13528 / IAM 13628 / NBRC 14792 / USDA 110).